A 404-amino-acid polypeptide reads, in one-letter code: Chorismate synthase (404 aa).

NADP(+) is bound by residues Arg-40 and Arg-46. FMN is bound by residues 136–138 (RAS), 257–258 (QA), Gly-301, 316–320 (KPIST), and Arg-342.

Belongs to the chorismate synthase family. Homotetramer. Requires FMNH2 as cofactor.

The enzyme catalyses 5-O-(1-carboxyvinyl)-3-phosphoshikimate = chorismate + phosphate. Its pathway is metabolic intermediate biosynthesis; chorismate biosynthesis; chorismate from D-erythrose 4-phosphate and phosphoenolpyruvate: step 7/7. In terms of biological role, catalyzes the anti-1,4-elimination of the C-3 phosphate and the C-6 proR hydrogen from 5-enolpyruvylshikimate-3-phosphate (EPSP) to yield chorismate, which is the branch point compound that serves as the starting substrate for the three terminal pathways of aromatic amino acid biosynthesis. This reaction introduces a second double bond into the aromatic ring system. In Mycolicibacterium vanbaalenii (strain DSM 7251 / JCM 13017 / BCRC 16820 / KCTC 9966 / NRRL B-24157 / PYR-1) (Mycobacterium vanbaalenii), this protein is Chorismate synthase.